The sequence spans 60 residues: UPF0434 protein ETA_21370 (60 aa).

The protein belongs to the UPF0434 family.

In Erwinia tasmaniensis (strain DSM 17950 / CFBP 7177 / CIP 109463 / NCPPB 4357 / Et1/99), this protein is UPF0434 protein ETA_21370.